The sequence spans 570 residues: Methyl-coenzyme M reductase subunit alpha (570 aa).

Gln-161 serves as a coordination point for coenzyme F430. Residues Arg-239, 270–271 (KH), and Arg-284 each bind coenzyme B. His-271 bears the Pros-methylhistidine mark. The residue at position 285 (Arg-285) is a 5-methylarginine. Coenzyme M-binding residues include Tyr-346 and Phe-464. Gly-465 carries the 1-thioglycine modification. At Asp-470 the chain carries (Z)-2,3-didehydroaspartate. The residue at position 472 (Cys-472) is an S-methylcysteine.

The protein belongs to the methyl-coenzyme M reductase alpha subunit family. In terms of assembly, MCR is a hexamer of two alpha, two beta, and two gamma chains, forming a dimer of heterotrimers. Coenzyme F430 is required as a cofactor. Post-translationally, the alpha subunit contains five modified amino acids near the active site region. Is methylated on His-271, Arg-285 and Cys-472, probably by the action of specific S-adenosylmethionine-dependent methyltransferases. Also contains a thioglycine at position 465, forming a thiopeptide bond. Contains a didehydroaspartate residue at position 470. The methylation on C5 of Arg-285 is a post-translational methylation not essential in vivo, but which plays a role for the stability and structural integrity of MCR. Does not show a methylation at Gln-420, as shown for M.marburgensis.

The protein localises to the cytoplasm. It carries out the reaction coenzyme B + methyl-coenzyme M = methane + coenzyme M-coenzyme B heterodisulfide. Its pathway is one-carbon metabolism; methyl-coenzyme M reduction; methane from methyl-coenzyme M: step 1/1. Its function is as follows. Component of the methyl-coenzyme M reductase (MCR) I that catalyzes the reductive cleavage of methyl-coenzyme M (CoM-S-CH3 or 2-(methylthio)ethanesulfonate) using coenzyme B (CoB or 7-mercaptoheptanoylthreonine phosphate) as reductant which results in the production of methane and the mixed heterodisulfide of CoB and CoM (CoM-S-S-CoB). This is the final step in methanogenesis. The chain is Methyl-coenzyme M reductase subunit alpha (mcrA) from Methanosarcina barkeri (strain Fusaro / DSM 804).